Consider the following 664-residue polypeptide: E3 ubiquitin-protein ligase CHFR (664 aa).

Positions 1 to 21 (MERPEEGKQSPPPQPWGRLLR) are disordered. The FHA domain maps to 38–89 (WTIGRRRGCDLSFPSNKLVSGDHCRIVVDEKSGQVTLEDTSTSGTVINKLKV). The tract at residues 142-267 (FHGTKDTSGA…KKMRGDGDLD (126 aa)) is disordered. A compositionally biased stretch (low complexity) spans 186–198 (PTASASSTEPSPA). Position 244 is a phosphoserine (serine 244). Over residues 254 to 264 (EPVKKKMRGDG) the composition is skewed to basic and acidic residues. Residues 304 to 343 (CIICQDLLHDCVSLQPCMHTFCAACYSGWMERSSLCPTCR) form an RING-type zinc finger. A Phosphothreonine modification is found at threonine 386. Disordered stretches follow at residues 388–417 (DMLQPKVRRSFSDEEGSSEDLLELSDVDSE) and 439–461 (AQPPHCPAPEGEPGAPQALGDAP). A compositionally biased stretch (acidic residues) spans 400-417 (DEEGSSEDLLELSDVDSE). The PBZ-type zinc-finger motif lies at 633–655 (PDCYWGRNCRTQVKAHHAMKFNH).

This sequence belongs to the CHFR family. Interacts with HDAC1 and HDAC2. Interacts with PML (with sumoylated form of PML). Post-translationally, poly-ADP-ribosylated. In addition to binding non covalently poly(ADP-ribose) via its PBZ-type zinc finger, the protein is also covalently poly-ADP-ribosylated by PARP1. Autoubiquitinated; may regulate its cellular level. In terms of processing, phosphorylated by PKB. Phosphorylation may affect its E3 ligase activity. Ubiquitous.

It is found in the nucleus. Its subcellular location is the PML body. The enzyme catalyses S-ubiquitinyl-[E2 ubiquitin-conjugating enzyme]-L-cysteine + [acceptor protein]-L-lysine = [E2 ubiquitin-conjugating enzyme]-L-cysteine + N(6)-ubiquitinyl-[acceptor protein]-L-lysine.. Its pathway is protein modification; protein ubiquitination. Functionally, E3 ubiquitin-protein ligase that functions in the antephase checkpoint by actively delaying passage into mitosis in response to microtubule poisons. Acts in early prophase before chromosome condensation, when the centrosome move apart from each other along the periphery of the nucleus. Probably involved in signaling the presence of mitotic stress caused by microtubule poisons by mediating the 'Lys-48'-linked ubiquitination of target proteins, leading to their degradation by the proteasome. Promotes the ubiquitination and subsequent degradation of AURKA and PLK1. Probably acts as a tumor suppressor, possibly by mediating the polyubiquitination of HDAC1, leading to its degradation. May also promote the formation of 'Lys-63'-linked polyubiquitin chains and functions with the specific ubiquitin-conjugating UBC13-MMS2 (UBE2N-UBE2V2) heterodimer. Substrates that are polyubiquitinated at 'Lys-63' are usually not targeted for degradation, but are rather involved in signaling cellular stress. The protein is E3 ubiquitin-protein ligase CHFR (CHFR) of Homo sapiens (Human).